A 1609-amino-acid chain; its full sequence is Transmembrane protein 131-like (1609 aa).

An N-terminal signal peptide occupies residues 1-40 (MAGLRRPQPGCYCRTAAAVNLLLGVFQVLLPCCRPGGAQG). At 41–869 (QAIEPLPNVV…VVPGPSWEES (829 aa)) the chain is on the extracellular side. Residues N343, N439, N522, N593, N709, and N846 are each glycosylated (N-linked (GlcNAc...) asparagine). The required for Wnt-signaling inhibition and LRP6 degradation stretch occupies residues 696-916 (DYGKVTSLIL…QNASSSSQQN (221 aa)). A helical membrane pass occupies residues 870 to 890 (FWRLTVFFVSLSLLGVILIAF). Topologically, residues 891-1609 (QQAQYILMEF…SRDSSYCGNV (719 aa)) are cytoplasmic. 5 disordered regions span residues 946 to 974 (RGKNCLPVNTPQSRIQNAAKRSPATYGHS), 991 to 1014 (TAAASSTSTTTEEKQTSPLGSSLP), 1108 to 1144 (KTSKKLPENHLPRNSPQYHQPDLPEISRKNNGNNQQV), 1159 to 1178 (VDTKPSSEKKIHKTSREDMF), and 1304 to 1340 (SSSDCGSSSGSVRASRGSWGSWSSTSSSDGDKKPMVD). Residues 952-961 (PVNTPQSRIQ) are compositionally biased toward polar residues. The segment covering 991–1000 (TAAASSTSTT) has biased composition (low complexity). At S1122 the chain carries Phosphoserine. Over residues 1304–1331 (SSSDCGSSSGSVRASRGSWGSWSSTSSS) the composition is skewed to low complexity.

The protein belongs to the TMEM131 family. Expressed in thymocytes.

It localises to the cell membrane. The protein localises to the cytoplasm. The protein resides in the endoplasmic reticulum. Its function is as follows. Membrane-associated form that antagonizes canonical Wnt signaling by triggering lysosome-dependent degradation of Wnt-activated LRP6. Regulates thymocyte proliferation. The chain is Transmembrane protein 131-like from Homo sapiens (Human).